The sequence spans 207 residues: Large ribosomal subunit protein uL4 (207 aa).

The interval 47–78 (GTASSKTRAEVRGGGKKPWRQKGTGRARVGSS) is disordered. The segment covering 60-71 (GGKKPWRQKGTG) has biased composition (basic residues).

This sequence belongs to the universal ribosomal protein uL4 family. As to quaternary structure, part of the 50S ribosomal subunit.

Its function is as follows. One of the primary rRNA binding proteins, this protein initially binds near the 5'-end of the 23S rRNA. It is important during the early stages of 50S assembly. It makes multiple contacts with different domains of the 23S rRNA in the assembled 50S subunit and ribosome. Functionally, forms part of the polypeptide exit tunnel. This chain is Large ribosomal subunit protein uL4, found in Syntrophomonas wolfei subsp. wolfei (strain DSM 2245B / Goettingen).